Reading from the N-terminus, the 75-residue chain is Brevinin-2SN2 (75 aa).

An N-terminal signal peptide occupies residues M1–C22. Residues E23–E40 constitute a propeptide, removed in mature form. A disulfide bond links C69 and C75.

This sequence belongs to the frog skin active peptide (FSAP) family. Brevinin subfamily. As to expression, expressed by the skin glands.

The protein localises to the secreted. Its function is as follows. Antimicrobial peptide. Active against some Gram-negative and a variety of Gram-positive bacterial strains. Active against fungus C.glabrata 090902 but not against C.albicans ATCC 10231. Shows hemolytic activity against human erythrocytes. The sequence is that of Brevinin-2SN2 from Sylvirana spinulosa (Fine-spined frog).